The sequence spans 245 residues: 1-(5-phosphoribosyl)-5-[(5-phosphoribosylamino)methylideneamino] imidazole-4-carboxamide isomerase (245 aa).

The active-site Proton acceptor is Asp-8. Asp-129 functions as the Proton donor in the catalytic mechanism.

Belongs to the HisA/HisF family.

The protein resides in the cytoplasm. It catalyses the reaction 1-(5-phospho-beta-D-ribosyl)-5-[(5-phospho-beta-D-ribosylamino)methylideneamino]imidazole-4-carboxamide = 5-[(5-phospho-1-deoxy-D-ribulos-1-ylimino)methylamino]-1-(5-phospho-beta-D-ribosyl)imidazole-4-carboxamide. The protein operates within amino-acid biosynthesis; L-histidine biosynthesis; L-histidine from 5-phospho-alpha-D-ribose 1-diphosphate: step 4/9. The chain is 1-(5-phosphoribosyl)-5-[(5-phosphoribosylamino)methylideneamino] imidazole-4-carboxamide isomerase from Rhodopseudomonas palustris (strain BisA53).